A 110-amino-acid chain; its full sequence is Endoribonuclease SymE (110 aa).

Positions 29–74 (SRYPEYTRIPAITLKGQWLEDAGFTTGTQVDVRVMNGCIVLTAQQP) constitute a SpoVT-AbrB domain.

It belongs to the SymE family.

It localises to the cytoplasm. Functionally, involved in the degradation and recycling of damaged RNA. It is itself a target for degradation by the ATP-dependent protease Lon. The polypeptide is Endoribonuclease SymE (Salmonella paratyphi C (strain RKS4594)).